A 528-amino-acid polypeptide reads, in one-letter code: Endoglucanase 24 (528 aa).

A signal peptide spans methionine 1–alanine 24. Aspartate 109 serves as the catalytic Nucleophile. N-linked (GlcNAc...) asparagine glycosylation is present at asparagine 259. Histidine 446 is an active-site residue. N-linked (GlcNAc...) asparagine glycosylation occurs at asparagine 487. Catalysis depends on residues aspartate 492 and glutamate 501.

It belongs to the glycosyl hydrolase 9 (cellulase E) family.

The protein resides in the secreted. It carries out the reaction Endohydrolysis of (1-&gt;4)-beta-D-glucosidic linkages in cellulose, lichenin and cereal beta-D-glucans.. The chain is Endoglucanase 24 from Oryza sativa subsp. japonica (Rice).